Consider the following 154-residue polypeptide: MAEGNKAVDLTSLSLEQLSEVIKQLDSELEYLSTSYGQLGRAQLKFRECLANVNDAVRAENDGKEVLVPLTSSLYVPGKLNLGNSKLLVDIGTGYYVEKSAGEATEYYKRKCEYLASSIENLNNAIDAKSVQIRAVQNIMQQKATATTAATKSS.

This sequence belongs to the prefoldin subunit alpha family. Heterohexamer of two PFD-alpha type and four PFD-beta type subunits. Interacts with byr1.

The protein resides in the cytoplasm. In terms of biological role, binds specifically to cytosolic chaperonin (c-CPN) and transfers target proteins to it. Binds to nascent polypeptide chain and promotes folding in an environment in which there are many competing pathways for nonnative proteins. Required for normal cytoskeletal function and when bound to byr1, is involved in the regulation of sexual differentiation. This Schizosaccharomyces pombe (strain 972 / ATCC 24843) (Fission yeast) protein is Probable prefoldin subunit 5 (bob1).